Consider the following 238-residue polypeptide: 2-C-methyl-D-erythritol 4-phosphate cytidylyltransferase (238 aa).

The protein belongs to the IspD/TarI cytidylyltransferase family. IspD subfamily.

The enzyme catalyses 2-C-methyl-D-erythritol 4-phosphate + CTP + H(+) = 4-CDP-2-C-methyl-D-erythritol + diphosphate. Its pathway is isoprenoid biosynthesis; isopentenyl diphosphate biosynthesis via DXP pathway; isopentenyl diphosphate from 1-deoxy-D-xylulose 5-phosphate: step 2/6. Catalyzes the formation of 4-diphosphocytidyl-2-C-methyl-D-erythritol from CTP and 2-C-methyl-D-erythritol 4-phosphate (MEP). In Alteromonas mediterranea (strain DSM 17117 / CIP 110805 / LMG 28347 / Deep ecotype), this protein is 2-C-methyl-D-erythritol 4-phosphate cytidylyltransferase.